The chain runs to 649 residues: Flavin-dependent oxygenase ucdD (649 aa).

FAD contacts are provided by glutamine 92, isoleucine 185, tyrosine 344, aspartate 370, and serine 386.

This sequence belongs to the PheA/TfdB FAD monooxygenase family. Homodimer. The cofactor is FAD.

It functions in the pathway secondary metabolite biosynthesis. In terms of biological role, nonribosomal peptide synthetase that mediates the biosynthesis of usterphenyllins and uscandidusins, p-terphenyl derivatives. Within the pathway, ucdD catalyzes the formation of 3,15-dihydroxyterphenyllin via dihydroxylation at C-3 of ring A and C-15 of ring C of the terphenyllin intermediate. The pathway begin with the biosynthesis of 4-hydroxyphenylpyruvate (HPPA) from L-tyrosine, possibly by the aminotransferase ucdG. The nonribosomal peptide synthetase ucdA then condenses two HPPA units to produce atromentin. The key step in this pathway is the reduction and dehydration of atromentin to form a terphenyl triol intermediate, performed by the NAD-dependent dehydrogenase ucdB. Further O-methylation by the methyltransferase ucdC forms terphenyllin carrying two methoxy moieties at C-9 and C-12, and subsequent dihydroxylation at C-3 of ring A and C-15 of ring C by the flavin-dependent oxygenase ucdD leads to 3,15-dihydroxyterphenyllin. Prenylation by ucdE at position C-5 of ring A forms usterphenyllin B, and is followed by a second prenylation at position C-14 of ring C to form usterphenyllin A. The following furan ring formation that leads to uscandidusins A and B was proven to be an unexpected spontaneous non-enzymatic reaction. The polypeptide is Flavin-dependent oxygenase ucdD (Aspergillus ustus).